The following is a 706-amino-acid chain: Ribosomal RNA large subunit methyltransferase K/L (706 aa).

Positions 43–154 constitute a THUMP domain; that stretch reads LLYQSLLWSR…RDMASVALDL (112 aa).

It belongs to the methyltransferase superfamily. RlmKL family.

Its subcellular location is the cytoplasm. The catalysed reaction is guanosine(2445) in 23S rRNA + S-adenosyl-L-methionine = N(2)-methylguanosine(2445) in 23S rRNA + S-adenosyl-L-homocysteine + H(+). It catalyses the reaction guanosine(2069) in 23S rRNA + S-adenosyl-L-methionine = N(2)-methylguanosine(2069) in 23S rRNA + S-adenosyl-L-homocysteine + H(+). In terms of biological role, specifically methylates the guanine in position 2445 (m2G2445) and the guanine in position 2069 (m7G2069) of 23S rRNA. The protein is Ribosomal RNA large subunit methyltransferase K/L of Serratia proteamaculans (strain 568).